The primary structure comprises 274 residues: NAD-dependent protein deacylase (274 aa).

Residues 4 to 274 (CLLPSSDMDA…GELLPKALAP (271 aa)) enclose the Deacetylase sirtuin-type domain. Residue 29 to 48 (GAGVSAESGVPTFRGAGGLW) participates in NAD(+) binding. Residues Y73 and R76 each contribute to the substrate site. Residue 111–114 (QNID) coordinates NAD(+). The active-site Proton acceptor is H129. Zn(2+) contacts are provided by C137, C140, C178, and C183. NAD(+) is bound by residues 220–222 (GTS), 246–248 (NME), and C264.

It belongs to the sirtuin family. Class III subfamily. The cofactor is Zn(2+).

The protein resides in the mitochondrion. The enzyme catalyses N(6)-malonyl-L-lysyl-[protein] + NAD(+) + H2O = 2''-O-malonyl-ADP-D-ribose + nicotinamide + L-lysyl-[protein]. The catalysed reaction is N(6)-succinyl-L-lysyl-[protein] + NAD(+) + H2O = 2''-O-succinyl-ADP-D-ribose + nicotinamide + L-lysyl-[protein]. It carries out the reaction N(6)-glutaryl-L-lysyl-[protein] + NAD(+) + H2O = 2''-O-glutaryl-ADP-D-ribose + nicotinamide + L-lysyl-[protein]. NAD-dependent lysine demalonylase, desuccinylase and deglutarylase that specifically removes malonyl, succinyl and glutaryl groups on target proteins. Has weak NAD-dependent protein deacetylase activity; however this activity may not be physiologically relevant in vivo. This Daphnia pulex (Water flea) protein is NAD-dependent protein deacylase.